The following is a 304-amino-acid chain: Killer cell immunoglobulin-like receptor 2DS2 (304 aa).

An N-terminal signal peptide occupies residues 1-21 (MSLMVVSMACVGFFLLQGAWP). Residues 22–245 (HEGVHRKPSL…SKTGNPRHLH (224 aa)) are Extracellular-facing. 2 consecutive Ig-like C2-type domains span residues 42 to 107 (EETV…VTHS) and 142 to 205 (GESV…FRDS). 2 disulfide bridges follow: C49-C100 and C149-C198. N84, N178, and N211 each carry an N-linked (GlcNAc...) asparagine glycan. The disordered stretch occupies residues 220 to 239 (VTGNPSNSWPSPTEPSSKTG). A helical membrane pass occupies residues 246–265 (VLIGTSVVKIPFTILLFFLL). Topologically, residues 266–304 (HRWCSNKKNAAVMDQEPAGNRTVNSEDSDEQDHQEVSYA) are cytoplasmic. Residues 280-304 (QEPAGNRTVNSEDSDEQDHQEVSYA) form a disordered region.

Belongs to the immunoglobulin superfamily.

It localises to the cell membrane. Receptor on natural killer (NK) cells for HLA-C alleles. Does not inhibit the activity of NK cells. This Homo sapiens (Human) protein is Killer cell immunoglobulin-like receptor 2DS2.